Consider the following 324-residue polypeptide: Probable fructokinase-5 (324 aa).

It belongs to the carbohydrate kinase PfkB family.

The catalysed reaction is D-fructose + ATP = D-fructose 6-phosphate + ADP + H(+). Its pathway is glycan biosynthesis; starch biosynthesis. Its function is as follows. May play an important role in maintaining the flux of carbon towards starch formation. This chain is Probable fructokinase-5, found in Arabidopsis thaliana (Mouse-ear cress).